The primary structure comprises 360 residues: MFVARSIAADHKDLIHDVSFDFHGRRMATCSSDQSVKVWDKSESGDWHCTASWKTHSGSVWRVTWAHPEFGQVLASCSFDRTAAVWEEIVGESNDKLRGQSHWVKRTTLVDSRTSVTDVKFAPKHMGLMLATCSADGIVRIYEAPDVMNLSQWSLQHEISCKLSCSCISWNPSSSRAHSPMIAVGSDDSSPNAMAKVQIFEYNENTRKYAKAETLMTVTDPVHDIAFAPNLGRSFHILAIATKDVRIFTLKPVRKELTSSGGPTKFEIHIVAHFDNHNSQVWRVSWNITGTVLASSGDDGCVRLWKANYMDNWKCTGILKGNGSPVNGSSQQGTSNPSLGSNIPSLQNSLNGSSAGRKHS.

WD repeat units lie at residues 10-49 (DHKD…DWHC), 55-96 (THSG…SNDK), 111-152 (DSRT…NLSQ), 160-210 (SCKL…RKYA), 217-258 (TVTD…KELT), and 276-315 (NHNS…NWKC). A Glycyl lysine isopeptide (Lys-Gly) (interchain with G-Cter in SUMO2) cross-link involves residue Lys12. Phosphoserine occurs at positions 179 and 190. Residues 324 to 354 (SPVNGSSQQGTSNPSLGSNIPSLQNSLNGSS) show a composition bias toward polar residues. A disordered region spans residues 324-360 (SPVNGSSQQGTSNPSLGSNIPSLQNSLNGSSAGRKHS).

Belongs to the WD repeat SEC13 family. Component of the Nup107-160 subcomplex of the nuclear pore complex (NPC). The Nup107-160 subcomplex includes NUP160, NUP133, NUP107, NUP98, NUP85, NUP43, NUP37, SEH1 and SEC13. The SEH1 subunit appears to be only weakly associated with the Nup107-160 subcomplex. Component of the GATOR2 subcomplex, composed of MIOS, SEC13, SEH1L, WDR24 and WDR59. The GATOR2 complex interacts with CASTOR1 and CASTOR2; the interaction is negatively regulated by arginine. The GATOR2 complex interacts with SESN1, SESN2 and SESN3; the interaction is negatively regulated by amino acids. SESN1, SESN2 and SESN3 convey leucine availability via direct interaction with SEH1L and WDR24.

The protein resides in the chromosome. The protein localises to the centromere. It is found in the kinetochore. Its subcellular location is the nucleus. It localises to the nuclear pore complex. The protein resides in the lysosome membrane. The GATOR2 complex is negatively regulated by the upstream amino acid sensors CASTOR1 and SESN2, which sequester the GATOR2 complex in absence of amino acids. In the presence of abundant amino acids, GATOR2 is released from CASTOR1 and SESN2 and activated. In terms of biological role, component of the Nup107-160 subcomplex of the nuclear pore complex (NPC). The Nup107-160 subcomplex is required for the assembly of a functional NPC. The Nup107-160 subcomplex is also required for normal kinetochore microtubule attachment, mitotic progression and chromosome segregation. This subunit plays a role in recruitment of the Nup107-160 subcomplex to the kinetochore. As a component of the GATOR2 complex, functions as an activator of the amino acid-sensing branch of the mTORC1 signaling pathway. The GATOR2 complex indirectly activates mTORC1 through the inhibition of the GATOR1 subcomplex. GATOR2 probably acts as an E3 ubiquitin-protein ligase toward GATOR1. In the presence of abundant amino acids, the GATOR2 complex mediates ubiquitination of the NPRL2 core component of the GATOR1 complex, leading to GATOR1 inactivation. In the absence of amino acids, GATOR2 is inhibited, activating the GATOR1 complex. Within the GATOR2 complex, SEC13 and SEH1L are required to stabilize the complex. The chain is Nucleoporin SEH1 (SEH1L) from Pongo abelii (Sumatran orangutan).